Consider the following 150-residue polypeptide: D-aminoacyl-tRNA deacylase (150 aa).

The Gly-cisPro motif, important for rejection of L-amino acids signature appears at 137-138; the sequence is GP.

This sequence belongs to the DTD family. Homodimer.

It localises to the cytoplasm. It catalyses the reaction glycyl-tRNA(Ala) + H2O = tRNA(Ala) + glycine + H(+). The catalysed reaction is a D-aminoacyl-tRNA + H2O = a tRNA + a D-alpha-amino acid + H(+). In terms of biological role, an aminoacyl-tRNA editing enzyme that deacylates mischarged D-aminoacyl-tRNAs. Also deacylates mischarged glycyl-tRNA(Ala), protecting cells against glycine mischarging by AlaRS. Acts via tRNA-based rather than protein-based catalysis; rejects L-amino acids rather than detecting D-amino acids in the active site. By recycling D-aminoacyl-tRNA to D-amino acids and free tRNA molecules, this enzyme counteracts the toxicity associated with the formation of D-aminoacyl-tRNA entities in vivo and helps enforce protein L-homochirality. The chain is D-aminoacyl-tRNA deacylase from Geotalea daltonii (strain DSM 22248 / JCM 15807 / FRC-32) (Geobacter daltonii).